The primary structure comprises 410 residues: Phytoene synthase 1, chloroplastic (410 aa).

Residues 1 to 62 constitute a chloroplast transit peptide; the sequence is MAIILVRAAS…EAGRPSPAVY (62 aa).

This sequence belongs to the phytoene/squalene synthase family. In terms of assembly, monomer. Expressed in embryos, endosperm and seedling leaves. Expressed in leaves and endosperm.

Its subcellular location is the plastid. It is found in the chloroplast stroma. The enzyme catalyses 2 (2E,6E,10E)-geranylgeranyl diphosphate = 15-cis-phytoene + 2 diphosphate. It participates in carotenoid biosynthesis; phytoene biosynthesis; all-trans-phytoene from geranylgeranyl diphosphate: step 1/1. Functionally, catalyzes the conversion of geranylgeranyl diphosphate to phytoene. Mediates the first committed step in carotenoid biosynthesis. The chain is Phytoene synthase 1, chloroplastic from Zea mays (Maize).